Consider the following 325-residue polypeptide: RNA ligase 1 (325 aa).

Mg(2+) is required as a cofactor. The cofactor is Mn(2+). AMPylates itself (auto-AMPylation).

It carries out the reaction ATP + (ribonucleotide)n-3'-hydroxyl + 5'-phospho-(ribonucleotide)m = (ribonucleotide)n+m + AMP + diphosphate.. Functions as an RNA ligase, in vitro. The ligation reaction entails three nucleotidyl transfer steps. In the first step, the RNA ligase reacts with ATP in the absence of nucleic acid to form a covalent ligase-AMP intermediate and release pyrophosphate. In step 2, the ligase-AMP binds to the nucleic acid and transfers the adenylate to the 5'-PO4 terminus to form an adenylylated intermediate. In step 3, the RNA ligase directs the attack of the 3'-OH on the 5'-phosphoanhydride linkage, resulting in a repaired 3'-5' phosphodiester and release of AMP. Exhibits selectivity for single-stranded RNA substrates and may not have nick-sealing activity on double-stranded DNA-RNA hybrids. May play a role in maintaining RNA integrity under stress conditions, for example in response to reactive oxygen species (ROS). This Pongo abelii (Sumatran orangutan) protein is RNA ligase 1.